The chain runs to 1427 residues: Multidrug resistance-associated protein 5 (1427 aa).

Residues 1 to 147 are Cytoplasmic-facing; that stretch reads MPSDSEEVCL…IYRFISTRLW (147 aa). Residues 148 to 168 form a helical membrane-spanning segment; it reads FSCAVFFFCLIFGFIGPTCFI. The ABC transmembrane type-1 1 domain maps to 151–432; that stretch reads AVFFFCLIFG…IPYGSRYLAE (282 aa). Topologically, residues 169–185 are extracellular; that stretch reads RRLIAFAENPERDEQSR. A helical transmembrane segment spans residues 186–206; sequence IVYSYGIALVAAISVVEFARV. The Cytoplasmic portion of the chain corresponds to 207-268; the sequence is LSYGATWAVS…RLFDAVTFAP (62 aa). A helical transmembrane segment spans residues 269–289; the sequence is LVLVGPLVLVGGIGYLLMVIG. Position 290 (R290) is a topological domain, extracellular. The helical transmembrane segment at 291-311 threads the bilayer; the sequence is WSLLGILVFFVFDVIQFGLGK. Over 312-375 the chain is Cytoplasmic; sequence SMVACRNLAI…RKSGYAQSLA (64 aa). A helical membrane pass occupies residues 376–396; that stretch reads IACGPVVPVVAAILTFVGVVL. Over 397–399 the chain is Extracellular; sequence AGN. Residues 400–420 form a helical membrane-spanning segment; sequence DLLASDAFSAITVYFVMLFGI. Over 421 to 770 the chain is Cytoplasmic; that stretch reads RMIPYGSRYL…TIAWRIYKQY (350 aa). The region spanning 486–707 is the ABC transporter 1 domain; the sequence is PTENEVIVVE…NDAYKTFVDA (222 aa). 518-525 lines the ATP pocket; the sequence is GAVGCGKS. Residues 771-791 form a helical membrane-spanning segment; that stretch reads IHAAGGWPIWTCLVIGFIVNV. The ABC transmembrane type-1 2 domain maps to 783–1078; it reads LVIGFIVNVV…AVRTQTELEA (296 aa). Residues 792-833 lie on the Extracellular side of the membrane; the sequence is VSNIFSTYWLSRWLKKGHDETTTITNGTEFLEMKTSLADSPV. A glycan (N-linked (GlcNAc...) asparagine) is linked at N817. Residues 834–854 form a helical membrane-spanning segment; it reads TGFYAAVYLVALVVLTISGLF. The Cytoplasmic segment spans residues 855-909; the sequence is KACVFVKVSLTAATRLHDRMFQAVIHGATSFFDSTPTGRILNRFSKDMDEIDVKL. The helical transmembrane segment at 910–930 threads the bilayer; the sequence is PFTAEVFLQNMITCLGFLVVI. A topological domain (extracellular) is located at residue T931. A helical membrane pass occupies residues 932 to 952; that stretch reads SVFPYFLLFAIPLFVVFVVFV. The Cytoplasmic segment spans residues 953-1022; that stretch reads SCFRAGIRNL…MFQSAMRWLA (70 aa). The helical transmembrane segment at 1023-1043 threads the bilayer; the sequence is VWLDLLVVVMTAIVALLTVML. At 1044–1049 the chain is on the extracellular side; it reads TGTVSP. Residues 1050-1070 form a helical membrane-spanning segment; it reads ADAGMAIAFAVQMSGIFQFAV. Residues 1071–1427 are Cytoplasmic-facing; that stretch reads RTQTELEAKM…SSDTDIEVVQ (357 aa). An ABC transporter 2 domain is found at 1117 to 1351; it reads INFSEVNLRY…DWSVYKLEDK (235 aa). 1151 to 1158 contacts ATP; it reads GRTGSGKS. Residues 1361 to 1427 are disordered; that stretch reads VGENSEHSME…SSDTDIEVVQ (67 aa). Over residues 1382-1418 the composition is skewed to basic and acidic residues; it reads DIVKVENEQKDSSDDVVHIESGDDDVKADSSEVKETS.

This sequence belongs to the ABC transporter superfamily. ABCC family. Conjugate transporter (TC 3.A.1.208) subfamily. Highly expressed in the intestine and pharynx. Expressed at low levels in the hypodermis and in some neurons.

The protein localises to the basolateral cell membrane. Heme transporter required for the export of intestinal heme to different tissues and subcellular compartments. Also, required for the export of vitamin B12 from the intestine of the mother to the embryo to support embryonic development. The chain is Multidrug resistance-associated protein 5 from Caenorhabditis elegans.